We begin with the raw amino-acid sequence, 2171 residues long: DExH-box ATP-dependent RNA helicase DExH12 (2171 aa).

Disordered stretches follow at residues 24-80, 218-267, and 383-426; these read SLVL…KERD, EENE…NEGT, and TAKE…ESGW. Composition is skewed to basic and acidic residues over residues 31 to 40 and 50 to 80; these read NRPRDTHEPT and IDPR…KERD. Positions 218–242 are enriched in acidic residues; it reads EENEEDDEESDPDMVEEDDDEEDDE. The segment covering 383 to 423 has biased composition (basic and acidic residues); that stretch reads TAKEREENLQKSINEEARRLKDETGGDGGRGRRDVADRDSE. The region spanning 514–697 is the Helicase ATP-binding 1 domain; sequence DTALFKAENI…FLRVDLKKGL (184 aa). Position 527-534 (527-534) interacts with ATP; sequence APTGAGKT. A DEIH box motif is present at residues 639 to 642; sequence DEIH. The Helicase C-terminal 1 domain occupies 731 to 941; it reads LCYQKVLAGA…GTVQNAREAC (211 aa). Residues 1006-1308 enclose the SEC63 1 domain; it reads TDLGRIASYY…WLGSETVLPV (303 aa). The region spanning 1360–1537 is the Helicase ATP-binding 2 domain; it reads TVLYNTNDNV…WIGASSHGLF (178 aa). 1373–1380 contacts ATP; that stretch reads APTGSGKT. Positions 1479–1482 match the DELH box motif; the sequence is DELH. Residues 1574 to 1779 enclose the Helicase C-terminal 2 domain; it reads AIVQHAKNKK…GVIENKQDAV (206 aa). The SEC63 2 domain occupies 1839–2157; sequence PLNLGMIASY…LGCDQEYSFS (319 aa).

This sequence belongs to the DExH box helicase family. In terms of assembly, interacts with CLO.

Its subcellular location is the nucleus. The catalysed reaction is ATP + H2O = ADP + phosphate + H(+). RNA helicase that plays an essential role in pre-mRNA splicing as component of the U5 snRNP and U4/U6-U5 tri-snRNP complexes. Involved in spliceosome assembly, activation and disassembly. The chain is DExH-box ATP-dependent RNA helicase DExH12 from Arabidopsis thaliana (Mouse-ear cress).